The chain runs to 393 residues: Na(+)/H(+) antiporter NhaA (393 aa).

Helical transmembrane passes span 23-43 (AGGI…NSPF), 58-78 (LSLA…LVGL), 96-116 (MLPG…FAVL), 126-146 (GWAV…SLLG), 155-175 (VFLA…IAIF), 178-198 (AEIS…LFVM), 201-221 (MGVV…FFVF), 224-244 (GVHA…KPAP), 265-285 (VAFI…FKGL), 298-318 (ILLG…WLAI), 334-354 (LYGV…IGLL), and 367-387 (IGVL…LRAA).

This sequence belongs to the NhaA Na(+)/H(+) (TC 2.A.33) antiporter family.

It is found in the cell inner membrane. The enzyme catalyses Na(+)(in) + 2 H(+)(out) = Na(+)(out) + 2 H(+)(in). Functionally, na(+)/H(+) antiporter that extrudes sodium in exchange for external protons. The chain is Na(+)/H(+) antiporter NhaA from Brucella canis (strain ATCC 23365 / NCTC 10854 / RM-666).